Here is a 135-residue protein sequence, read N- to C-terminus: C-type lectin LmsL (135 aa).

4 cysteine pairs are disulfide-bonded: Cys-3–Cys-14, Cys-31–Cys-131, Cys-38–Cys-133, and Cys-106–Cys-123. One can recognise a C-type lectin domain in the interval 10–132; the sequence is MNGLCYKIFD…CESKNAFLCQ (123 aa). Ca(2+)-binding residues include Gln-96, Asp-98, Glu-104, Asn-119, and Asp-120. Residues 96–98 carry the Galactose-binding motif; the sequence is QPD.

Belongs to the true venom lectin family. As to quaternary structure, homodimer; disulfide-linked. As to expression, expressed by the venom gland.

Its subcellular location is the secreted. Galactose-binding protein which recognizes specific carbohydrate structures and agglutinates a variety of animal cells by binding to cell-surface glycoproteins and glycolipids. Is a calcium-dependent lectin. Shows high hemagglutinating activity, that is inhibited by lactose, galactose and inositol. This chain is C-type lectin LmsL, found in Lachesis stenophrys (Central American bushmaster).